The chain runs to 113 residues: C-X-C motif chemokine 6 (113 aa).

Positions 1–36 (MSLLPSRAARVPGPSSSLCALLALLLLTPPGPLVSA) are cleaved as a signal peptide. Disulfide bonds link cysteine 48–cysteine 74 and cysteine 50–cysteine 90.

This sequence belongs to the intercrine alpha (chemokine CxC) family.

It is found in the secreted. In terms of biological role, chemotactic for neutrophil granulocytes. Signals through binding and activation of its receptors (CXCR1 and CXCR2). In addition to its chemotactic and angiogenic properties, it has strong antibacterial activity against Gram-positive and Gram-negative bacteria (90-fold-higher when compared to CXCL5 and CXCL7). In Equus caballus (Horse), this protein is C-X-C motif chemokine 6 (CXCL6).